Reading from the N-terminus, the 560-residue chain is DNA-directed primase/polymerase protein (560 aa).

Positions 1-22 (MNRKWEAKLKQIEERASHYERK) form a coiled coil. Residues arginine 76, 114–116 (DLE), and 165–169 (KFSRH) contribute to the substrate site. Residues aspartate 114 and glutamate 116 each contribute to the Mn(2+) site. The interval 203 to 223 (EDDDSAPETTGHGFPHFSEAP) is disordered. Serine 255 bears the Phosphoserine mark. Substrate contacts are provided by residues 288–291 (RNFR) and lysine 297. Zn(2+) contacts are provided by cysteine 419, histidine 426, cysteine 446, and cysteine 451. Residues 419–452 (CENIGRAHKSNNIMILVDLKNEVWYQKCHDPVCK) carry the Zinc knuckle motif motif. A disordered region spans residues 480–507 (TTDEADETRSNETQNPHKPSPSRLSTGA). Residues 481 to 560 (TDEADETRSN…DELIIEVLQE (80 aa)) are interaction with RPA1. A compositionally biased stretch (polar residues) spans 490-507 (NETQNPHKPSPSRLSTGA). Short sequence motifs (RPA1-binding motif) lie at residues 513-527 (WDNG…EATE) and 548-556 (EIPDELIIE).

Belongs to the eukaryotic-type primase small subunit family. In terms of assembly, interacts with RPA1; leading to recruitment to chromatin and stimulate DNA primase activity. Interacts with SSBP1. Interacts with POLDIP2; leading to enhance DNA polymerase activity. Mn(2+) serves as cofactor.

Its subcellular location is the nucleus. The protein localises to the mitochondrion matrix. The protein resides in the chromosome. It catalyses the reaction ssDNA + n NTP = ssDNA/pppN(pN)n-1 hybrid + (n-1) diphosphate.. It carries out the reaction DNA(n) + a 2'-deoxyribonucleoside 5'-triphosphate = DNA(n+1) + diphosphate. In terms of biological role, DNA primase and DNA polymerase required to tolerate replication-stalling lesions by bypassing them. Required to facilitate mitochondrial and nuclear replication fork progression by initiating de novo DNA synthesis using dNTPs and acting as an error-prone DNA polymerase able to bypass certain DNA lesions. Shows a high capacity to tolerate DNA damage lesions such as 8oxoG and abasic sites in DNA. Provides different translesion synthesis alternatives when DNA replication is stalled: able to synthesize DNA primers downstream of lesions, such as ultraviolet (UV) lesions, R-loops and G-quadruplexes, to allow DNA replication to continue. Can also realign primers ahead of 'unreadable lesions' such as abasic sites and 6-4 photoproduct (6-4 pyrimidine-pyrimidinone), thereby skipping the lesion. Repriming avoids fork degradation while leading to accumulation of internal ssDNA gaps behind the forks. Also able to incorporate nucleotides opposite DNA lesions such as 8oxoG, like a regular translesion synthesis DNA polymerase. Also required for reinitiating stalled forks after UV damage during nuclear DNA replication. Required for mitochondrial DNA (mtDNA) synthesis and replication, by reinitiating synthesis after UV damage or in the presence of chain-terminating nucleotides. Prevents APOBEC family-mediated DNA mutagenesis by repriming downstream of abasic site to prohibit error-prone translesion synthesis. Has non-overlapping function with POLH. In addition to its role in DNA damage response, also required to maintain efficient nuclear and mitochondrial DNA replication in unperturbed cells. This is DNA-directed primase/polymerase protein from Homo sapiens (Human).